Here is a 46-residue protein sequence, read N- to C-terminus: DNA-directed RNA polymerase subunit Rpo12 (46 aa).

Cys8, Cys23, and Cys26 together coordinate Zn(2+).

It belongs to the archaeal Rpo12/eukaryotic RPC10 RNA polymerase subunit family. In terms of assembly, part of the RNA polymerase complex. Zn(2+) serves as cofactor.

The protein resides in the cytoplasm. The catalysed reaction is RNA(n) + a ribonucleoside 5'-triphosphate = RNA(n+1) + diphosphate. In terms of biological role, DNA-dependent RNA polymerase (RNAP) catalyzes the transcription of DNA into RNA using the four ribonucleoside triphosphates as substrates. The chain is DNA-directed RNA polymerase subunit Rpo12 from Archaeoglobus fulgidus (strain ATCC 49558 / DSM 4304 / JCM 9628 / NBRC 100126 / VC-16).